A 186-amino-acid chain; its full sequence is Ribosome maturation factor RimM (186 aa).

In terms of domain architecture, PRC barrel spans 100–182 (NEGEYHVSDL…RIEINPPVGL (83 aa)).

It belongs to the RimM family. Binds ribosomal protein uS19.

The protein resides in the cytoplasm. In terms of biological role, an accessory protein needed during the final step in the assembly of 30S ribosomal subunit, possibly for assembly of the head region. Essential for efficient processing of 16S rRNA. May be needed both before and after RbfA during the maturation of 16S rRNA. It has affinity for free ribosomal 30S subunits but not for 70S ribosomes. The protein is Ribosome maturation factor RimM of Rippkaea orientalis (strain PCC 8801 / RF-1) (Cyanothece sp. (strain PCC 8801)).